A 921-amino-acid polypeptide reads, in one-letter code: TRPM8 channel-associated factor 1 (921 aa).

The 300-residue stretch at 542–841 folds into the Peptidase M60 domain; it reads YCWMSTGLYI…TYLQLQEAFG (300 aa).

The protein belongs to the TCAF family. In terms of assembly, interacts with TRPM8 (via N-terminus and C-terminus domains); the interaction inhibits TRPM8 channel activity. Interacts with TRPV6.

It localises to the cell membrane. Positively regulates the plasma membrane cation channel TRPM8 activity. Involved in the recruitment of TRPM8 to the cell surface. Promotes prostate cancer cell migration inhibition in a TRPM8-dependent manner. The sequence is that of TRPM8 channel-associated factor 1 from Bos taurus (Bovine).